The following is a 241-amino-acid chain: MATVSMRDMLQAGVHFGHQTRYWNPKMKPFIFGARNKVHIINLEKTVPMFNEALVELNKIASRKGKILFVGTKRSAVEAVKEAAESCDQFYVNHRWLGGMLTNWKTVRQSIKRLKDLESQSQDGTFDKLTKKEALMRSRELGKLENSLGGIKDMGGLPDALFVIDAEHEHIAIKEANNLGIPVFAIVDTNSDPDGIDYIIPGNDDAIRAVKLYLTAAATAVREGRSQDLAVQAEEGLVEAE.

Belongs to the universal ribosomal protein uS2 family.

This chain is Small ribosomal subunit protein uS2, found in Proteus mirabilis (strain HI4320).